A 977-amino-acid chain; its full sequence is Kinesin-like protein KIN-7L, chloroplastic (977 aa).

Polar residues predominate over residues 1 to 12 (MGSKQVSKTRNG). The tract at residues 1–66 (MGSKQVSKTR…PPKPLQSKEN (66 aa)) is disordered. 2 stretches are compositionally biased toward low complexity: residues 22-31 (SSASSTTSSS) and 38-54 (SVDS…RSKP). A Kinesin motor domain is found at 66-385 (NVTVTVRFRP…LKFAHRAKHI (320 aa)). 146–153 (GVTSSGKT) provides a ligand contact to ATP. Positions 386 to 471 (EIQAAQNKII…LTKLILVSNK (86 aa)) form a coiled coil. The interval 549–589 (DSSLGGSSLSDKSSAVKSNSTPSTPQGEGSDFHTESRLSEG) is disordered. Residues 551–561 (SLGGSSLSDKS) are compositionally biased toward low complexity. The span at 563–575 (AVKSNSTPSTPQG) shows a compositional bias: polar residues. 2 coiled-coil regions span residues 626 to 688 (MEIL…GKQI) and 732 to 942 (IQEQ…LENE). The span at 864-876 (SSVTTPQGKTGNL) shows a compositional bias: polar residues. Disordered regions lie at residues 864 to 891 (SSVT…KEQE) and 958 to 977 (AANS…HFGT). Over residues 879-891 (GRRESVSKRKEQE) the composition is skewed to basic and acidic residues. Polar residues predominate over residues 958–967 (AANSGLSDSV). Residues 968–977 (SETRIEHFGT) are compositionally biased toward basic and acidic residues.

Belongs to the TRAFAC class myosin-kinesin ATPase superfamily. Kinesin family. KIN-7 subfamily.

The protein localises to the plastid. The protein resides in the chloroplast. This chain is Kinesin-like protein KIN-7L, chloroplastic, found in Arabidopsis thaliana (Mouse-ear cress).